We begin with the raw amino-acid sequence, 191 residues long: Protein YceI (191 aa).

Residues 1-22 (MKKSLLGLTFASLMFSAGSAVA) form the signal peptide.

The protein belongs to the UPF0312 family. Type 1 subfamily.

It is found in the periplasm. This Escherichia coli O17:K52:H18 (strain UMN026 / ExPEC) protein is Protein YceI.